A 208-amino-acid polypeptide reads, in one-letter code: Tektin bundle-interacting protein 1 (208 aa).

In terms of assembly, microtubule inner protein component of sperm flagellar doublet microtubules. As to expression, expressed in trachea multiciliated cells.

The protein resides in the cytoplasm. It is found in the cytoskeleton. It localises to the cilium axoneme. Its subcellular location is the flagellum axoneme. In terms of biological role, microtubule inner protein (MIP) part of the dynein-decorated doublet microtubules (DMTs) in cilia axoneme, which is required for motile cilia beating. Located at the center of the tektin bundle where may function to recruit tektins or stabilize the bundle. The sequence is that of Tektin bundle-interacting protein 1 (TEKTIP1) from Bos taurus (Bovine).